A 126-amino-acid polypeptide reads, in one-letter code: FCS-Like Zinc finger 7 (126 aa).

Residues 72–116 (SFLVNCGFCKRGLAPGRDIYMYKGDAAFCSIECREQQMEHDEGKT) form an FLZ-type zinc finger.

This sequence belongs to the FLZ family. As to quaternary structure, interacts with KIN10 and KIN11 via its FLZ-type zinc finger domain. Interacts with KINB3 via its N-terminal part. Forms homodimer and heterodimer with FLZ1, FLZ2 and FLZ15 in vitro.

It is found in the cytoplasm. The protein localises to the nucleus. Its function is as follows. May act as an adapter to facilitate the interaction of SnRK1 complex with effector proteins, conferring tissue- and stimulus-type specific differences in the SnRK1 regulation pathway. The polypeptide is FCS-Like Zinc finger 7 (Arabidopsis thaliana (Mouse-ear cress)).